The primary structure comprises 233 residues: MAKLTKRMRTIRAKVDVTKEYDINEAVALLKELATAKFVESVDVAVNLGIDARKSDQNVRGATVLPHGTGRDIRVAVFTQGANAEAAKAAGAELVGMEDLADLVKKGEMNFDVVIASPDAMRVVGQLGTILGPRGLMPNPKVGTVTPNVAEAVKNAKAGQVRYRNDKNGIIHTTIGKVTFEADQLKENLEALLVALKKAKPSSAKGVFVKKVSISTTMGAGVAVDQNTLSAQV.

The protein belongs to the universal ribosomal protein uL1 family. In terms of assembly, part of the 50S ribosomal subunit.

Its function is as follows. Binds directly to 23S rRNA. The L1 stalk is quite mobile in the ribosome, and is involved in E site tRNA release. Functionally, protein L1 is also a translational repressor protein, it controls the translation of the L11 operon by binding to its mRNA. This is Large ribosomal subunit protein uL1 from Vibrio cholerae serotype O1 (strain ATCC 39315 / El Tor Inaba N16961).